A 72-amino-acid polypeptide reads, in one-letter code: Sec-independent protein translocase protein TatA (72 aa).

The chain crosses the membrane as a helical span at residues 1 to 21 (MGSFSIWHWLIVLAVVLLLFG). The disordered stretch occupies residues 43–72 (MADEDAKEDPRTIDAKAEEPVKDVKKTTKS). Basic and acidic residues predominate over residues 50–72 (EDPRTIDAKAEEPVKDVKKTTKS).

This sequence belongs to the TatA/E family. The Tat system comprises two distinct complexes: a TatABC complex, containing multiple copies of TatA, TatB and TatC subunits, and a separate TatA complex, containing only TatA subunits. Substrates initially bind to the TatABC complex, which probably triggers association of the separate TatA complex to form the active translocon.

It localises to the cell inner membrane. In terms of biological role, part of the twin-arginine translocation (Tat) system that transports large folded proteins containing a characteristic twin-arginine motif in their signal peptide across membranes. TatA could form the protein-conducting channel of the Tat system. In Brucella suis biovar 1 (strain 1330), this protein is Sec-independent protein translocase protein TatA.